The sequence spans 145 residues: Large ribosomal subunit protein uL11m (145 aa).

The protein belongs to the universal ribosomal protein uL11 family.

The protein localises to the mitochondrion. In Reclinomonas americana, this protein is Large ribosomal subunit protein uL11m (RPL11).